Reading from the N-terminus, the 140-residue chain is Large ribosomal subunit protein uL16 (140 aa).

Belongs to the universal ribosomal protein uL16 family. In terms of assembly, part of the 50S ribosomal subunit.

In terms of biological role, binds 23S rRNA and is also seen to make contacts with the A and possibly P site tRNAs. In Phytoplasma australiense, this protein is Large ribosomal subunit protein uL16.